The primary structure comprises 442 residues: tRNA modification GTPase MnmE (442 aa).

(6S)-5-formyl-5,6,7,8-tetrahydrofolate contacts are provided by R27, E84, and K124. One can recognise a TrmE-type G domain in the interval 221 to 366 (GLHVVIVGAP…LLDALQAFAE (146 aa)). Residues 231 to 236 (NAGKSS), 250 to 256 (SEEAGTT), and 275 to 278 (DTAG) contribute to the GTP site. Mg(2+)-binding residues include S235 and T256. Residue K442 participates in (6S)-5-formyl-5,6,7,8-tetrahydrofolate binding.

This sequence belongs to the TRAFAC class TrmE-Era-EngA-EngB-Septin-like GTPase superfamily. TrmE GTPase family. As to quaternary structure, homodimer. Heterotetramer of two MnmE and two MnmG subunits. K(+) is required as a cofactor.

The protein localises to the cytoplasm. Functionally, exhibits a very high intrinsic GTPase hydrolysis rate. Involved in the addition of a carboxymethylaminomethyl (cmnm) group at the wobble position (U34) of certain tRNAs, forming tRNA-cmnm(5)s(2)U34. The sequence is that of tRNA modification GTPase MnmE from Brucella suis (strain ATCC 23445 / NCTC 10510).